The sequence spans 218 residues: Glycoprotein UL1 (218 aa).

The N-terminal stretch at M1 to A27 is a signal peptide. A helical transmembrane segment spans residues V178–V198.

The protein belongs to the RL11 family.

Its subcellular location is the virion membrane. The sequence is that of Glycoprotein UL1 (UL1) from Homo sapiens (Human).